A 254-amino-acid polypeptide reads, in one-letter code: 3-deoxy-manno-octulosonate cytidylyltransferase (254 aa).

Belongs to the KdsB family.

It is found in the cytoplasm. The enzyme catalyses 3-deoxy-alpha-D-manno-oct-2-ulosonate + CTP = CMP-3-deoxy-beta-D-manno-octulosonate + diphosphate. It participates in nucleotide-sugar biosynthesis; CMP-3-deoxy-D-manno-octulosonate biosynthesis; CMP-3-deoxy-D-manno-octulosonate from 3-deoxy-D-manno-octulosonate and CTP: step 1/1. The protein operates within bacterial outer membrane biogenesis; lipopolysaccharide biosynthesis. Functionally, activates KDO (a required 8-carbon sugar) for incorporation into bacterial lipopolysaccharide in Gram-negative bacteria. The sequence is that of 3-deoxy-manno-octulosonate cytidylyltransferase from Nitrobacter winogradskyi (strain ATCC 25391 / DSM 10237 / CIP 104748 / NCIMB 11846 / Nb-255).